An 854-amino-acid polypeptide reads, in one-letter code: DNA topoisomerase 1 type prokaryotic (854 aa).

In terms of domain architecture, Toprim spans 2–110 (SILILLESPG…KRLRFNAITK (109 aa)). Mg(2+) contacts are provided by E8 and D79. The Topo IA-type catalytic domain maps to 124-610 (DKNLVDAQKA…DFYDKLKPIV (487 aa)). Positions 158–163 (SAGRVQ) are interaction with DNA. Catalysis depends on Y302, which acts as the O-(5'-phospho-DNA)-tyrosine intermediate. Residues 802–854 (KSAPKGGSKTIRKPSQTKYSQTKSTKSTKSTKSTNKKFVGKSAKKTTKKTTKK) are disordered. Low complexity predominate over residues 814–834 (KPSQTKYSQTKSTKSTKSTKS). Residues 835-854 (TNKKFVGKSAKKTTKKTTKK) are compositionally biased toward basic residues.

This sequence belongs to the type IA topoisomerase family. It depends on Mg(2+) as a cofactor.

The protein resides in the virion. It carries out the reaction ATP-independent breakage of single-stranded DNA, followed by passage and rejoining.. In terms of biological role, releases the supercoiling and torsional tension of DNA, which is introduced during the DNA replication and transcription, by transiently cleaving and rejoining one strand of the DNA duplex. Introduces a single-strand break via transesterification at a target site in duplex DNA. The scissile phosphodiester is attacked by the catalytic tyrosine of the enzyme, resulting in the formation of a DNA-(5'-phosphotyrosyl)-enzyme intermediate and the expulsion of a 3'-OH DNA strand. The free DNA strand then undergoes passage around the unbroken strand, thus removing DNA supercoils. Finally, in the religation step, the DNA 3'-OH attacks the covalent intermediate to expel the active-site tyrosine and restore the DNA phosphodiester backbone. The sequence is that of DNA topoisomerase 1 type prokaryotic (TOP1P) from Acanthamoeba polyphaga (Amoeba).